The chain runs to 134 residues: MIKKYEGCFLFRSEELEYKSALEEVKKQLVAFGAVDFVENSIGERALEYPVRKQLRGRYEIIEFKMASDNLRELEAQLKLIKNLLRYMILVKINRKVSVKKVKRRNFREYRDNKDIKEKEQPSESNVDADLKVN.

The span at 113-122 shows a compositional bias: basic and acidic residues; sequence NKDIKEKEQP. The interval 113–134 is disordered; sequence NKDIKEKEQPSESNVDADLKVN.

It belongs to the bacterial ribosomal protein bS6 family.

Functionally, binds together with bS18 to 16S ribosomal RNA. The chain is Small ribosomal subunit protein bS6 from Borrelia recurrentis (strain A1).